Reading from the N-terminus, the 188-residue chain is Peptidyl-tRNA hydrolase (188 aa).

Tyr16 serves as a coordination point for tRNA. The active-site Proton acceptor is the His21. 3 residues coordinate tRNA: Phe66, Asn68, and Asn114.

It belongs to the PTH family. As to quaternary structure, monomer.

Its subcellular location is the cytoplasm. It catalyses the reaction an N-acyl-L-alpha-aminoacyl-tRNA + H2O = an N-acyl-L-amino acid + a tRNA + H(+). Its function is as follows. Hydrolyzes ribosome-free peptidyl-tRNAs (with 1 or more amino acids incorporated), which drop off the ribosome during protein synthesis, or as a result of ribosome stalling. In terms of biological role, catalyzes the release of premature peptidyl moieties from peptidyl-tRNA molecules trapped in stalled 50S ribosomal subunits, and thus maintains levels of free tRNAs and 50S ribosomes. In Citrifermentans bemidjiense (strain ATCC BAA-1014 / DSM 16622 / JCM 12645 / Bem) (Geobacter bemidjiensis), this protein is Peptidyl-tRNA hydrolase.